Reading from the N-terminus, the 155-residue chain is DNA gyrase inhibitor (155 aa).

Belongs to the DNA gyrase inhibitor family. As to quaternary structure, interacts with DNA gyrase.

Its subcellular location is the cytoplasm. Its function is as follows. Inhibits the supercoiling activity of DNA gyrase. Acts by inhibiting DNA gyrase at an early step, prior to (or at the step of) binding of DNA by the gyrase. It protects cells against toxins that target DNA gyrase, by inhibiting activity of these toxins and reducing the formation of lethal double-strand breaks in the cell. This Salmonella arizonae (strain ATCC BAA-731 / CDC346-86 / RSK2980) protein is DNA gyrase inhibitor.